The sequence spans 146 residues: Cytochrome c-type biogenesis protein CcmE (146 aa).

The Cytoplasmic portion of the chain corresponds to 1–7 (MQAKHQR). The helical; Signal-anchor for type II membrane protein transmembrane segment at 8–28 (LILGIIALAAVIAAGFLALVA) threads the bilayer. Residues 29–146 (FKKQAAYFFT…AATQTTLQEK (118 aa)) are Periplasmic-facing. Residues histidine 123 and tyrosine 127 each contribute to the heme site.

It belongs to the CcmE/CycJ family.

The protein resides in the cell inner membrane. Heme chaperone required for the biogenesis of c-type cytochromes. Transiently binds heme delivered by CcmC and transfers the heme to apo-cytochromes in a process facilitated by CcmF and CcmH. The chain is Cytochrome c-type biogenesis protein CcmE from Zymomonas mobilis subsp. mobilis (strain ATCC 31821 / ZM4 / CP4).